Reading from the N-terminus, the 382-residue chain is MKIIVLLLLAVVLASADQTAPGTASRPILTASESNYFTTATYLQGWSPPSISTSKADYTVGNGYNTIQAAVNAAINTGGTTRKYIKINAGTYQEVVYIPNTKVPLTIYGGGSSPSDTLITLNMPAQTTPSAYKSLVGSLFNSADPAYSMYNSCASKSGTIGTSCSTVFWVKAPAVQIVNLSIENSAKNTGDQQAVALQTNSDQIQIHNARLLGHQDTLYAGSGSSSVERSYYTNTYIEGDIDFVFGGGSAIFESCTFYVKADRRSDTAVVFAPDTDPHKMYGYFVYKSTITGDSAWSSSKKAYLGRAWDSGVSSSSAYVPGTSPNGQLIIKESTIDGIINTSGPWTTATSGRTYSGNNANSRDLNNDNYNRFWEYNNSGNGA.

An N-terminal signal peptide occupies residues 1 to 16 (MKIIVLLLLAVVLASA). The cysteines at positions 153 and 164 are disulfide-linked. Asn179 carries an N-linked (GlcNAc...) asparagine glycan. Gln193 is a binding site for substrate. Catalysis depends on Asp216, which acts as the Proton donor. Asp242 acts as the Nucleophile in catalysis. Substrate-binding residues include Arg306 and Trp308. N-linked (GlcNAc...) asparagine glycans are attached at residues Asn340 and Asn376.

This sequence belongs to the pectinesterase family. In terms of tissue distribution, expressed throughout the midgut with particularly strong expression in the ventriculus.

It localises to the secreted. It carries out the reaction [(1-&gt;4)-alpha-D-galacturonosyl methyl ester](n) + n H2O = [(1-&gt;4)-alpha-D-galacturonosyl](n) + n methanol + n H(+). The protein operates within glycan metabolism; pectin degradation; 2-dehydro-3-deoxy-D-gluconate from pectin: step 1/5. Its function is as follows. Pectinesterase which probably plays an important role in the digestion of plant cell walls. This Sitophilus oryzae (Rice weevil) protein is Pectinesterase.